Here is a 219-residue protein sequence, read N- to C-terminus: MKAYLFIFIFLFLLNFLILFFVLKTELIVSSLIAGGYALFVSAFTSYVYTKKVEKLLGVLLYFAEFVYENRQNLEGSVFYSPLYEELRDIVSYIEGGIKNVKSSLEKQLADVHVEYTEVVEKLGQIMEVVERLKQGEIEYGALPTGLDPAGALGEILRESLSEIAKKIDNIKRKIYELDDTIKKVKNYAEAGEEELVKAEITRTKSILEEIEKELEFFK.

The helical transmembrane segment at 28–50 threads the bilayer; that stretch reads IVSSLIAGGYALFVSAFTSYVYT. A coiled-coil region spans residues 155–218; sequence EILRESLSEI…EEIEKELEFF (64 aa).

Its subcellular location is the membrane. This is an uncharacterized protein from Aquifex aeolicus (strain VF5).